We begin with the raw amino-acid sequence, 423 residues long: Cell adhesion molecule CEACAM16 (423 aa).

The signal sequence occupies residues 1-22 (MKMPLTWGSWFLLSAWILNAGA). Residue Asn38 is glycosylated (N-linked (GlcNAc...) asparagine). The disordered stretch occupies residues 77 to 96 (ETPGPAHTGREAVRPDGSLD). Residues 84–95 (TGREAVRPDGSL) show a composition bias toward basic and acidic residues. 2 Ig-like C2-type domains span residues 134 to 219 (PPTV…LNLT) and 224 to 310 (PERV…ASVV). Cys155 and Cys202 are disulfide-bonded. N-linked (GlcNAc...) asparagine glycosylation occurs at Asn217. An intrachain disulfide couples Cys253 to Cys294.

Belongs to the immunoglobulin superfamily. CEA family. Homooligomer; can for homodimers and homotetramers. Interacts with TECTA and TECTB.

Its subcellular location is the secreted. In terms of biological role, required for proper hearing, plays a role in maintaining the integrity of the tectorial membrane. The polypeptide is Cell adhesion molecule CEACAM16 (Rattus norvegicus (Rat)).